Consider the following 470-residue polypeptide: Solute carrier family 7 member 13 (470 aa).

The Cytoplasmic segment spans residues 1-11 (MDRGEKIQLKR). Residues 12 to 32 (VFGYWWGTSFLLINIIGAGIF) traverse the membrane as a helical segment. Topologically, residues 33–45 (VSPKGVLAYSCMN) are extracellular. A helical transmembrane segment spans residues 46-66 (VGVSLCVWAGCAILAMTSTLC). Residues 67-87 (SAEISISFPCSGAQYYFLKRY) are Cytoplasmic-facing. Residues 88-108 (FGSTVAFLNLWTSLFLGSGVV) form a helical membrane-spanning segment. The Extracellular portion of the chain corresponds to 109–128 (AGQALLLAEYSIQPFFPSCS). A helical membrane pass occupies residues 129-149 (VPKLPKKCLALAMLWIVGILT). The Cytoplasmic segment spans residues 150–162 (SRGVKEVTWLQIA). A helical membrane pass occupies residues 163–183 (SSVLKVSILSFISLTGVVFLI). Over 184 to 206 (RGKKENVERFQNAFDAELPDISH) the chain is Extracellular. A helical transmembrane segment spans residues 207–227 (LIQAIFQGYFAYSGGACFTLI). The Cytoplasmic portion of the chain corresponds to 228-240 (AGELKKPRTTIPK). Residues 241 to 261 (CIFTALPLVTVVYLLVNISYL) form a helical membrane-spanning segment. Topologically, residues 262–287 (TVLTPREILSSDAVAITWADRAFPSL) are extracellular. The chain crosses the membrane as a helical span at residues 288-308 (AWIMPFAISTSLFSNLLISIF). At 309–336 (KSSRPIYLASQEGQLPLLFNTLNSHSSP) the chain is on the cytoplasmic side. Residues 337–357 (FTAVLLLVTLGSLAIILTSLI) form a helical membrane-spanning segment. D358 is a topological domain (extracellular). Residues 359-379 (LINYIFFTGSLWSILLMIGIL) form a helical membrane-spanning segment. Topologically, residues 380-393 (RRRYQEPNLSIPYK) are cytoplasmic. The chain crosses the membrane as a helical span at residues 394 to 414 (VFLSFPLATIVIDVGLVVIPL). Residues 415–421 (VKSPNVH) lie on the Extracellular side of the membrane. A helical transmembrane segment spans residues 422 to 442 (YVYVLLLVLSGLLFYIPLIHF). Residues 443 to 470 (KIRLAWFEKMTCYLQLLFNICLPDVSEE) are Cytoplasmic-facing.

The protein belongs to the amino acid-polyamine-organocation (APC) superfamily. As to quaternary structure, disulfide-linked heterodimer composed of the catalytic light subunit SLC7A13 and the heavy subunit SLC3A1. Expressed in the kidney.

Its subcellular location is the apical cell membrane. The enzyme catalyses L-cystine(out) + L-aspartate(in) = L-cystine(in) + L-aspartate(out). It catalyses the reaction L-cystine(out) = L-cystine(in). It carries out the reaction L-aspartate(in) + L-glutamate(out) = L-aspartate(out) + L-glutamate(in). The catalysed reaction is L-aspartate(in) + L-glutamine(out) = L-aspartate(out) + L-glutamine(in). The enzyme catalyses L-aspartate(in) + L-methionine(out) = L-aspartate(out) + L-methionine(in). It catalyses the reaction L-leucine(out) + L-aspartate(in) = L-leucine(in) + L-aspartate(out). It carries out the reaction L-valine(out) + L-aspartate(in) = L-valine(in) + L-aspartate(out). The catalysed reaction is L-aspartate(in) + L-phenylalanine(out) = L-aspartate(out) + L-phenylalanine(in). The enzyme catalyses L-tyrosine(out) + L-aspartate(in) = L-tyrosine(in) + L-aspartate(out). It catalyses the reaction L-tryptophan(out) + L-aspartate(in) = L-tryptophan(in) + L-aspartate(out). Its function is as follows. Associates with SLC3A1/rBAT to form a functional heterodimeric complex that transports anionic and neutral amino acids across the apical plasma membrane of renal epithelium. Preferentially mediates exchange transport, but can also operate via facilitated diffusion. May act as a major transporter for L-cystine in late proximal tubules, ensuring its reabsorption from the luminal fluid in exchange for cytosolic L-glutamate or L-aspartate. The chain is Solute carrier family 7 member 13 (SLC7A13) from Homo sapiens (Human).